A 102-amino-acid chain; its full sequence is Small ribosomal subunit protein uS10 (102 aa).

The protein belongs to the universal ribosomal protein uS10 family. Part of the 30S ribosomal subunit.

Functionally, involved in the binding of tRNA to the ribosomes. In Pyrococcus horikoshii (strain ATCC 700860 / DSM 12428 / JCM 9974 / NBRC 100139 / OT-3), this protein is Small ribosomal subunit protein uS10.